Reading from the N-terminus, the 532-residue chain is CTP synthase (532 aa).

An amidoligase domain region spans residues 1–267 (MTKYIFVTGG…DDIVLEHLQL (267 aa)). S13 is a binding site for CTP. S13 is a UTP binding site. Position 14-19 (14-19 (SIGKGI)) interacts with ATP. Y54 is a binding site for L-glutamine. An ATP-binding site is contributed by D71. Mg(2+) contacts are provided by D71 and E141. Residues 148-150 (DIE), 188-193 (KTKPTQ), and K224 each bind CTP. UTP contacts are provided by residues 188 to 193 (KTKPTQ) and K224. The Glutamine amidotransferase type-1 domain maps to 292-532 (RIGLVGKYVS…DFVGAALNNK (241 aa)). Residue G354 coordinates L-glutamine. C381 acts as the Nucleophile; for glutamine hydrolysis in catalysis. L-glutamine contacts are provided by residues 382-385 (LGMQ), E405, and R462. Active-site residues include H507 and E509.

It belongs to the CTP synthase family. Homotetramer.

The catalysed reaction is UTP + L-glutamine + ATP + H2O = CTP + L-glutamate + ADP + phosphate + 2 H(+). It carries out the reaction L-glutamine + H2O = L-glutamate + NH4(+). It catalyses the reaction UTP + NH4(+) + ATP = CTP + ADP + phosphate + 2 H(+). It participates in pyrimidine metabolism; CTP biosynthesis via de novo pathway; CTP from UDP: step 2/2. Allosterically activated by GTP, when glutamine is the substrate; GTP has no effect on the reaction when ammonia is the substrate. The allosteric effector GTP functions by stabilizing the protein conformation that binds the tetrahedral intermediate(s) formed during glutamine hydrolysis. Inhibited by the product CTP, via allosteric rather than competitive inhibition. Functionally, catalyzes the ATP-dependent amination of UTP to CTP with either L-glutamine or ammonia as the source of nitrogen. Regulates intracellular CTP levels through interactions with the four ribonucleotide triphosphates. In Listeria monocytogenes serotype 4b (strain F2365), this protein is CTP synthase.